The sequence spans 394 residues: Formate-dependent phosphoribosylglycinamide formyltransferase (394 aa).

Residues 21-22 (EL) and E81 each bind N(1)-(5-phospho-beta-D-ribosyl)glycinamide. ATP contacts are provided by residues R113, K154, 159–164 (SSGKGQ), 194–197 (EEFI), and E202. The region spanning 118-307 (RLAAEELGLP…QFELHVRAIL (190 aa)) is the ATP-grasp domain. Mg(2+) is bound by residues E266 and E278. N(1)-(5-phospho-beta-D-ribosyl)glycinamide-binding positions include D285, K355, and 362-363 (RR).

Belongs to the PurK/PurT family. Homodimer.

The catalysed reaction is N(1)-(5-phospho-beta-D-ribosyl)glycinamide + formate + ATP = N(2)-formyl-N(1)-(5-phospho-beta-D-ribosyl)glycinamide + ADP + phosphate + H(+). Its pathway is purine metabolism; IMP biosynthesis via de novo pathway; N(2)-formyl-N(1)-(5-phospho-D-ribosyl)glycinamide from N(1)-(5-phospho-D-ribosyl)glycinamide (formate route): step 1/1. Involved in the de novo purine biosynthesis. Catalyzes the transfer of formate to 5-phospho-ribosyl-glycinamide (GAR), producing 5-phospho-ribosyl-N-formylglycinamide (FGAR). Formate is provided by PurU via hydrolysis of 10-formyl-tetrahydrofolate. The chain is Formate-dependent phosphoribosylglycinamide formyltransferase from Pelobacter propionicus (strain DSM 2379 / NBRC 103807 / OttBd1).